The following is a 393-amino-acid chain: Acetyl-CoA acetyltransferase (393 aa).

C90 (acyl-thioester intermediate) is an active-site residue. Residues H349 and C379 each act as proton acceptor in the active site.

It belongs to the thiolase-like superfamily. Thiolase family. In terms of assembly, homotetramer.

The protein localises to the cytoplasm. The catalysed reaction is 2 acetyl-CoA = acetoacetyl-CoA + CoA. It functions in the pathway biopolymer metabolism; poly-(R)-3-hydroxybutanoate biosynthesis. Its pathway is metabolic intermediate biosynthesis; (R)-mevalonate biosynthesis; (R)-mevalonate from acetyl-CoA: step 1/3. This Rhizobium meliloti (strain 1021) (Ensifer meliloti) protein is Acetyl-CoA acetyltransferase.